A 446-amino-acid polypeptide reads, in one-letter code: tRNA modification GTPase MnmE (446 aa).

Residues arginine 24, glutamate 81, and lysine 120 each contribute to the (6S)-5-formyl-5,6,7,8-tetrahydrofolate site. In terms of domain architecture, TrmE-type G spans 216–368; it reads GLHAVLIGPP…LHIRLRELAL (153 aa). Asparagine 226 serves as a coordination point for K(+). GTP is bound by residues 226 to 231, 245 to 251, and 270 to 273; these read NAGKSS, TDVAGTT, and DTAG. Residue serine 230 coordinates Mg(2+). K(+) is bound by residues threonine 245, valine 247, and threonine 250. A Mg(2+)-binding site is contributed by threonine 251. Lysine 446 contributes to the (6S)-5-formyl-5,6,7,8-tetrahydrofolate binding site.

Belongs to the TRAFAC class TrmE-Era-EngA-EngB-Septin-like GTPase superfamily. TrmE GTPase family. Homodimer. Heterotetramer of two MnmE and two MnmG subunits. Requires K(+) as cofactor.

The protein resides in the cytoplasm. In terms of biological role, exhibits a very high intrinsic GTPase hydrolysis rate. Involved in the addition of a carboxymethylaminomethyl (cmnm) group at the wobble position (U34) of certain tRNAs, forming tRNA-cmnm(5)s(2)U34. The sequence is that of tRNA modification GTPase MnmE from Xanthomonas oryzae pv. oryzae (strain PXO99A).